The sequence spans 146 residues: MGLTAHDRQLINSTWGKLCAKTIGQEALGRLLWTYPWTQRYFSSFGNLNSADAVFHNEAVAAHGEKVVTSIGEAIKHMDDIKGYYAQLSKYHSETLHVDPLNFKRFGGCLSIALARHFHEEYTPELHAAYEHLFDAIADALGKGYH.

Residues 2–146 enclose the Globin domain; sequence GLTAHDRQLI…IADALGKGYH (145 aa). 2 residues coordinate heme b: histidine 63 and histidine 92.

Belongs to the globin family. Heterotetramer of two alpha chains and two beta chains. As to expression, red blood cells.

Its function is as follows. Involved in oxygen transport from the lung to the various peripheral tissues. The chain is Hemoglobin subunit beta-1 (hbb1) from Xenopus laevis (African clawed frog).